The sequence spans 132 residues: Methylglyoxal synthase (132 aa).

The MGS-like domain occupies 1 to 132 (MNIALIAHDQ…LLEWREIEDK (132 aa)). The substrate site is built by H8 and K12. D60 (proton donor/acceptor) is an active-site residue. Substrate is bound at residue H87.

Belongs to the methylglyoxal synthase family.

It carries out the reaction dihydroxyacetone phosphate = methylglyoxal + phosphate. Catalyzes the formation of methylglyoxal from dihydroxyacetone phosphate. The protein is Methylglyoxal synthase of Thermoanaerobacter pseudethanolicus (strain ATCC 33223 / 39E) (Clostridium thermohydrosulfuricum).